The sequence spans 169 residues: Unfolded protein response-inducible protein 1 (169 aa).

Functionally, involved in the unfolded protein response (UPR), a transcriptional response which up-regulates genes that enable cells to cope with misfolded, endoplasmic reticulum-retained proteins. UPR is part of the endoplasmic reticulum quality control (ERQC) which prevents the exit of misfolded secretory and membrane proteins from the endoplasmic reticulum. In Saccharomyces cerevisiae (strain ATCC 204508 / S288c) (Baker's yeast), this protein is Unfolded protein response-inducible protein 1 (ULI1).